The primary structure comprises 224 residues: Metalloproteinase inhibitor 4 (224 aa).

Positions 1–29 are cleaved as a signal peptide; the sequence is MPWSPLAALSWALVLRLLALLWPPGRGEA. Cys-30 contacts Zn(2+). Involved in metalloproteinase-binding stretches follow at residues 30–33 and 99–100; these read CSCA and SS. 6 disulfides stabilise this stretch: Cys-30/Cys-102, Cys-32/Cys-131, Cys-42/Cys-156, Cys-158/Cys-205, Cys-163/Cys-168, and Cys-176/Cys-197. The NTR domain occupies 30 to 156; the sequence is CSCAPAHPQQ…SLNHHYHQNC (127 aa).

This sequence belongs to the protease inhibitor I35 (TIMP) family. Expressed in brain, heart, ovary and skeletal muscle.

It is found in the secreted. Functionally, complexes with metalloproteinases (such as collagenases) and irreversibly inactivates them by binding to their catalytic zinc cofactor. The polypeptide is Metalloproteinase inhibitor 4 (Timp4) (Mus musculus (Mouse)).